The primary structure comprises 270 residues: FKBP-type peptidyl-prolyl cis-trans isomerase FkpA (270 aa).

A signal peptide spans 1–25; that stretch reads MKSLFKVTLLATTMAVALHAPITFA. Residues 164 to 249 enclose the PPIase FKBP-type domain; sequence SDTVVVNYKG…VFDVELLDVK (86 aa).

The protein belongs to the FKBP-type PPIase family.

It is found in the periplasm. It catalyses the reaction [protein]-peptidylproline (omega=180) = [protein]-peptidylproline (omega=0). PPIases accelerate the folding of proteins. It catalyzes the cis-trans isomerization of proline imidic peptide bonds in oligopeptides. This is FKBP-type peptidyl-prolyl cis-trans isomerase FkpA (fkpA) from Escherichia coli (strain K12).